We begin with the raw amino-acid sequence, 455 residues long: Rho GTPase-activating protein 3 (455 aa).

Positions 1-12 (MTNFSRSKSTGT) are enriched in polar residues. Residues 1-68 (MTNFSRSKST…HASRSGNGSG (68 aa)) are disordered. The segment covering 24 to 33 (GPDKYENIHN) has biased composition (basic and acidic residues). Residues 43–54 (STTSTDYYDAST) show a composition bias toward low complexity. Over residues 55 to 64 (PLSSHASRSG) the composition is skewed to polar residues. The region spanning 105-118 (IGWPTEVKHVSHVT) is the CRIB domain. The 179-residue stretch at 153-331 (KSMQCSYDDR…LILMNLKERE (179 aa)) folds into the Rho-GAP domain. Disordered regions lie at residues 342–366 (KQTS…KPNN) and 432–455 (FVSN…SLPW). Positions 435–446 (NRDEGRKGREAW) are enriched in basic and acidic residues.

Expressed in differentiating xylem cells.

The protein localises to the cell membrane. In terms of biological role, acts as a GTPase activator for the Rac-type GTPase by converting it to an inactive GDP-bound state. Involved in secondary wall pattern formation. In association with ROPGEF4, mediates local activation of ARAC10/ROP11 to initiate the distinct pattern of secondary cell walls in xylem cells. This Arabidopsis thaliana (Mouse-ear cress) protein is Rho GTPase-activating protein 3 (ROPGAP3).